The sequence spans 411 residues: Mitotic apparatus protein p62 (411 aa).

Composition is skewed to acidic residues over residues 134 to 156 (AYEVGDEDLEDEDEGEEDEEEEE), 183 to 201 (ELDEDEDDDEEEEEEEEEI), and 246 to 321 (DDDE…EEDS). The segment at 134 to 378 (AYEVGDEDLE…KSPSKPKKEE (245 aa)) is disordered. Basic and acidic residues predominate over residues 351–367 (GMKEKKTYSLEDMKQDL).

It belongs to the nucleoplasmin family. In terms of processing, phosphorylated by CaM-kinase II in vitro.

The protein resides in the nucleus. Its function is as follows. Required for mitotic progression. Binds to chromatin. The chain is Mitotic apparatus protein p62 from Lytechinus pictus (Painted sea urchin).